A 503-amino-acid polypeptide reads, in one-letter code: Xylan O-acetyltransferase 12 (503 aa).

The Cytoplasmic segment spans residues 1–54 (MWSALFSHLREVHKRSGVKEEKLIMKSPAAAGEAAGCHKPQATATNKMTVLQSP). The chain crosses the membrane as a helical; Signal-anchor for type II membrane protein span at residues 55 to 77 (LGLRTILTSLVAFFIVVSSVSLL). Residues 78–503 (FDRSQDAQAQ…EFLYAYLMHK (426 aa)) lie on the Lumenal side of the membrane. Intrachain disulfides connect Cys153–Cys204, Cys175–Cys240, Cys184–Cys484, and Cys400–Cys480. Residues Asn154, Asn164, Asn190, and Asn210 are each glycosylated (N-linked (GlcNAc...) asparagine). Positions 227-229 (GDS) match the GDS motif motif. Ser229 (nucleophile) is an active-site residue. Residues Asn256, Asn268, Asn373, Asn402, and Asn443 are each glycosylated (N-linked (GlcNAc...) asparagine). The active-site Proton donor is the Asp479. Residues 479–482 (DCTH) carry the DXXH motif motif. His482 acts as the Proton acceptor in catalysis.

Belongs to the PC-esterase family. TBL subfamily.

The protein localises to the golgi apparatus membrane. Xylan acetyltransferase required for 2-O- and 3-O-monoacetylation of xylosyl residues in xylan. Catalyzes the 2-O-acetylation of xylan, followed by nonenzymatic acetyl migration to the O-3 position, resulting in products that are monoacetylated at both O-2 and O-3 positions. The protein is Xylan O-acetyltransferase 12 of Oryza sativa subsp. japonica (Rice).